Consider the following 129-residue polypeptide: Phosphoribosyl-AMP cyclohydrolase (129 aa).

Position 82 (Asp-82) interacts with Mg(2+). Cys-83 provides a ligand contact to Zn(2+). Positions 84 and 86 each coordinate Mg(2+). Cys-99 and Cys-106 together coordinate Zn(2+).

The protein belongs to the PRA-CH family. As to quaternary structure, homodimer. Mg(2+) serves as cofactor. Requires Zn(2+) as cofactor.

It localises to the cytoplasm. The enzyme catalyses 1-(5-phospho-beta-D-ribosyl)-5'-AMP + H2O = 1-(5-phospho-beta-D-ribosyl)-5-[(5-phospho-beta-D-ribosylamino)methylideneamino]imidazole-4-carboxamide. The protein operates within amino-acid biosynthesis; L-histidine biosynthesis; L-histidine from 5-phospho-alpha-D-ribose 1-diphosphate: step 3/9. Catalyzes the hydrolysis of the adenine ring of phosphoribosyl-AMP. In Methanosarcina barkeri (strain Fusaro / DSM 804), this protein is Phosphoribosyl-AMP cyclohydrolase.